A 118-amino-acid chain; its full sequence is Small ribosomal subunit protein uS13 (118 aa).

Positions 91–118 (HRRSLPLRGQRTKNNARTRKGPKKPIKR) are disordered.

The protein belongs to the universal ribosomal protein uS13 family. As to quaternary structure, part of the 30S ribosomal subunit. Forms a loose heterodimer with protein S19. Forms two bridges to the 50S subunit in the 70S ribosome.

Functionally, located at the top of the head of the 30S subunit, it contacts several helices of the 16S rRNA. In the 70S ribosome it contacts the 23S rRNA (bridge B1a) and protein L5 of the 50S subunit (bridge B1b), connecting the 2 subunits; these bridges are implicated in subunit movement. Contacts the tRNAs in the A and P-sites. This chain is Small ribosomal subunit protein uS13, found in Hydrogenovibrio crunogenus (strain DSM 25203 / XCL-2) (Thiomicrospira crunogena).